Reading from the N-terminus, the 235-residue chain is LexA repressor (235 aa).

Positions 47-67 (IREIADAVGLTSTSSVAHQLR) form a DNA-binding region, H-T-H motif. Active-site for autocatalytic cleavage activity residues include Ser-159 and Lys-196.

It belongs to the peptidase S24 family. In terms of assembly, homodimer.

The enzyme catalyses Hydrolysis of Ala-|-Gly bond in repressor LexA.. Represses a number of genes involved in the response to DNA damage (SOS response), including recA and lexA. In the presence of single-stranded DNA, RecA interacts with LexA causing an autocatalytic cleavage which disrupts the DNA-binding part of LexA, leading to derepression of the SOS regulon and eventually DNA repair. This chain is LexA repressor, found in Mycobacterium leprae (strain Br4923).